Consider the following 422-residue polypeptide: MKLSDIYLELKKGYADSLLYSDLSLLVNIMEYEKDIDVMSIQSLVAGYEKSDTPTITCGIIVYNESKRIKKCLNSVKDDFNEIIVLDSYSTDDTVDIIKCDFPDVEIKYEKWKNDFSYARNKIIEYATSEWIYFIDADNLYSKENKGKIAKVARVLEFFSIDCVVSPYIEEYTGHLYSDTRRMFRLNGKVKFHGKVHEEPMNYNHSLPFNFIVNLKVYHNGYNPSENNIKSKTRRNINLTEEMLRLEPENPKWLFFFGRELHLLDKDEEAIDYLKKSINNYKKFNDQRHFIDALVLLCTLLLQRNNYVDLTLYLDILETEYPRCVDVDYFRSAILLVDMQNKLTSLSNMIDEALTDERYSAINTTKDHFKRILISLNIQLENWERVKEISGEIKNDNMKKEIKQYLANSLHNIEHVLKGIEV.

The protein belongs to the glycosyltransferase 2 family.

Transfers a hexose moiety onto 'Cys-41' of bacteriocin sublancin-168 (SunA). Accepts UDP-glucose (UDP-Glc), UDP-N-acetylglucosamine (UDP-GlcNAc), UDP-galactose (UDP-Gal), UDP-xylose (UDP-Xyl) and GDP-mannose as substrate. This Bacillus subtilis (strain 168) protein is SPbeta prophage-derived glycosyltransferase SunS (sunS).